The chain runs to 204 residues: N-(5'-phosphoribosyl)anthranilate isomerase (204 aa).

The protein belongs to the TrpF family.

The enzyme catalyses N-(5-phospho-beta-D-ribosyl)anthranilate = 1-(2-carboxyphenylamino)-1-deoxy-D-ribulose 5-phosphate. It functions in the pathway amino-acid biosynthesis; L-tryptophan biosynthesis; L-tryptophan from chorismate: step 3/5. In Bacillus cereus (strain Q1), this protein is N-(5'-phosphoribosyl)anthranilate isomerase.